The primary structure comprises 273 residues: Transmembrane epididymal protein 1 (273 aa).

6 helical membrane-spanning segments follow: residues 34 to 54 (IVTG…GMVL), 72 to 92 (LTMF…KNVL), 96 to 116 (CVGL…LLMV), 129 to 149 (VYSL…AELW), 158 to 178 (LMET…GFIL), and 195 to 215 (IMFV…FLLG).

The protein belongs to the TMEM45 family.

The protein localises to the membrane. The sequence is that of Transmembrane epididymal protein 1 (TEDDM1) from Homo sapiens (Human).